The sequence spans 132 residues: Global transcriptional regulator Spx (132 aa).

Cysteine 10 and cysteine 13 are oxidised to a cystine.

This sequence belongs to the ArsC family. Spx subfamily. Interacts with the C-terminal domain of the alpha subunit of the RNAP.

Its subcellular location is the cytoplasm. Its function is as follows. Global transcriptional regulator that plays a key role in stress response and exerts either positive or negative regulation of genes. Acts by interacting with the C-terminal domain of the alpha subunit of the RNA polymerase (RNAP). This interaction can enhance binding of RNAP to the promoter region of target genes and stimulate their transcription, or block interaction of RNAP with activator. The chain is Global transcriptional regulator Spx from Lactiplantibacillus plantarum (strain ATCC BAA-793 / NCIMB 8826 / WCFS1) (Lactobacillus plantarum).